A 96-amino-acid polypeptide reads, in one-letter code: Protein Vpr (96 aa).

The interval 1–42 (MEQAPEDQGPQREPYNEWTLELLEELKNEAVRHFPRPWLHGL) is homooligomerization. A Phosphoserine; by host modification is found at S79.

It belongs to the HIV-1 VPR protein family. Homooligomer, may form homodimer. Interacts with p6-gag region of the Pr55 Gag precursor protein through a (Leu-X-X)4 motif near the C-terminus of the P6gag protein. Interacts with host UNG. May interact with host RAD23A/HHR23A. Interacts with host VPRBP/DCAF1, leading to hijack the CUL4A-RBX1-DDB1-DCAF1/VPRBP complex, mediating ubiquitination of host proteins such as TERT and ZGPAT and arrest of the cell cycle in G2 phase. In terms of processing, phosphorylated on several residues by host. These phosphorylations regulate VPR activity for the nuclear import of the HIV-1 pre-integration complex.

The protein localises to the virion. The protein resides in the host nucleus. Its subcellular location is the host extracellular space. Its function is as follows. During virus replication, may deplete host UNG protein, and incude G2-M cell cycle arrest. Acts by targeting specific host proteins for degradation by the 26S proteasome, through association with the cellular CUL4A-DDB1 E3 ligase complex by direct interaction with host VPRPB/DCAF-1. Cell cycle arrest reportedly occurs within hours of infection and is not blocked by antiviral agents, suggesting that it is initiated by the VPR carried into the virion. Additionally, VPR induces apoptosis in a cell cycle dependent manner suggesting that these two effects are mechanistically linked. Detected in the serum and cerebrospinal fluid of AIDS patient, VPR may also induce cell death to bystander cells. In terms of biological role, during virus entry, plays a role in the transport of the viral pre-integration (PIC) complex to the host nucleus. This function is crucial for viral infection of non-dividing macrophages. May act directly at the nuclear pore complex, by binding nucleoporins phenylalanine-glycine (FG)-repeat regions. This Human immunodeficiency virus type 1 group M subtype G (isolate 92NG083) (HIV-1) protein is Protein Vpr.